Here is a 152-residue protein sequence, read N- to C-terminus: Large ribosomal subunit protein bL9 (152 aa).

This sequence belongs to the bacterial ribosomal protein bL9 family.

In terms of biological role, binds to the 23S rRNA. The polypeptide is Large ribosomal subunit protein bL9 (Coxiella burnetii (strain RSA 331 / Henzerling II)).